Reading from the N-terminus, the 322-residue chain is Lymphokine-activated killer T-cell-originated protein kinase (322 aa).

At Met-1 the chain carries N-acetylmethionine. Phosphothreonine occurs at positions 9 and 24. At Ser-32 the chain carries Phosphoserine. Positions 32–322 (SPFMQKLGFG…HIVEALETDV (291 aa)) constitute a Protein kinase domain. ATP is bound at residue 38–46 (LGFGTGVNV). Ser-59 carries the post-translational modification Phosphoserine. Lys-64 serves as a coordination point for ATP. Residue Asp-167 is the Proton acceptor of the active site. Lys-169 is covalently cross-linked (Glycyl lysine isopeptide (Lys-Gly) (interchain with G-Cter in SUMO2)). The interval 320–322 (TDV) is PDZ-interaction.

This sequence belongs to the protein kinase superfamily. STE Ser/Thr protein kinase family. MAP kinase kinase subfamily. Interacts with DLG1 and TP53. Phosphorylated; in a cell-cycle dependent manner at mitosis. In terms of tissue distribution, expressed in the testis and placenta. In the testis, restrictedly expressed in outer cell layer of seminiferous tubules.

The enzyme catalyses L-seryl-[protein] + ATP = O-phospho-L-seryl-[protein] + ADP + H(+). It catalyses the reaction L-threonyl-[protein] + ATP = O-phospho-L-threonyl-[protein] + ADP + H(+). The catalysed reaction is L-tyrosyl-[protein] + ATP = O-phospho-L-tyrosyl-[protein] + ADP + H(+). Activated by phosphorylation. Functionally, phosphorylates MAP kinase p38. Seems to be active only in mitosis. May also play a role in the activation of lymphoid cells. When phosphorylated, forms a complex with TP53, leading to TP53 destabilization and attenuation of G2/M checkpoint during doxorubicin-induced DNA damage. In Homo sapiens (Human), this protein is Lymphokine-activated killer T-cell-originated protein kinase (PBK).